A 430-amino-acid chain; its full sequence is Cytochrome P450 monooxygenase FGSG_15680 (430 aa).

Cys351 is a heme binding site.

The protein belongs to the cytochrome P450 family. It depends on heme as a cofactor.

It functions in the pathway mycotoxin biosynthesis. Functionally, cytochrome P450 monooxygenase; part of the gene cluster that mediates the biosynthesis of gramillins A and B, bicyclic lipopeptides that induce cell death in maize leaves but not in wheat leaves. The nonribosomal peptide synthetase GRA1 incorporates respectively a glutamic adic (Glu), a leucine (Leu), a serine (Ser), a hydroxyglutamine (HOGln), a 2-amino decanoic acid, and 2 cysteins (CysB and CysA). The biosynthesis of 2-amino decanoic acid incorporated in gramillins could be initiated by a fatty acid synthase composed of the alpha and beta subunits FGSG_00036 and FGSG_11656. The cytochrome P450 monooxygenase FGSG_15680 could hydroxylate the fatty acid chain. Subsequent oxidation to the ketone by the oxidoreductase FGSG_00048 and transamination by aminotransferase FGSG_00049 could form 2-amino-decanoic acid. On the other hand, FGSG_15680 could also be responsible for the HO-modified glutamine at the gamma-position. Whether hydroxylation occurs on the fully assembled product or on the Gln residue prior to assembly into the gramillins requires further proof. The thioredoxin FGSG_00043 could also be required for the disulfide-bond formation between CysA and CysB. The specific involvement of the remaining proteins from the cluster is more difficult to discern, but could have broader regulatory (FGSG_00040 and FGSG_11657) or enzymatic functions (FGSG_00044 and FGSG_00045). The final C-domain of GRA1 does not possess the expected sequence of a termination CT domain, often implicated in macrocyclization and release of a cyclopeptidein fungal NRPs; and the thioesterase FGSG_00047 may act in concert with the terminal C-domain of GRA1 to catalyze the formation of the macrocyclic anhydride and release of the products. This is Cytochrome P450 monooxygenase FGSG_15680 from Gibberella zeae (strain ATCC MYA-4620 / CBS 123657 / FGSC 9075 / NRRL 31084 / PH-1) (Wheat head blight fungus).